We begin with the raw amino-acid sequence, 110 residues long: Large ribosomal subunit protein uL22 (110 aa).

It belongs to the universal ribosomal protein uL22 family. Part of the 50S ribosomal subunit.

Its function is as follows. This protein binds specifically to 23S rRNA; its binding is stimulated by other ribosomal proteins, e.g. L4, L17, and L20. It is important during the early stages of 50S assembly. It makes multiple contacts with different domains of the 23S rRNA in the assembled 50S subunit and ribosome. The globular domain of the protein is located near the polypeptide exit tunnel on the outside of the subunit, while an extended beta-hairpin is found that lines the wall of the exit tunnel in the center of the 70S ribosome. The polypeptide is Large ribosomal subunit protein uL22 (Leptospira interrogans serogroup Icterohaemorrhagiae serovar copenhageni (strain Fiocruz L1-130)).